The primary structure comprises 250 residues: Imidazole glycerol phosphate synthase subunit HisF (250 aa).

Catalysis depends on residues aspartate 11 and aspartate 130.

The protein belongs to the HisA/HisF family. Heterodimer of HisH and HisF.

The protein resides in the cytoplasm. It carries out the reaction 5-[(5-phospho-1-deoxy-D-ribulos-1-ylimino)methylamino]-1-(5-phospho-beta-D-ribosyl)imidazole-4-carboxamide + L-glutamine = D-erythro-1-(imidazol-4-yl)glycerol 3-phosphate + 5-amino-1-(5-phospho-beta-D-ribosyl)imidazole-4-carboxamide + L-glutamate + H(+). Its pathway is amino-acid biosynthesis; L-histidine biosynthesis; L-histidine from 5-phospho-alpha-D-ribose 1-diphosphate: step 5/9. Functionally, IGPS catalyzes the conversion of PRFAR and glutamine to IGP, AICAR and glutamate. The HisF subunit catalyzes the cyclization activity that produces IGP and AICAR from PRFAR using the ammonia provided by the HisH subunit. In Bacteroides fragilis (strain YCH46), this protein is Imidazole glycerol phosphate synthase subunit HisF.